Reading from the N-terminus, the 900-residue chain is Phosphoenolpyruvate carboxylase (900 aa).

Residues His140 and Lys568 contribute to the active site.

It belongs to the PEPCase type 1 family. It depends on Mg(2+) as a cofactor.

It catalyses the reaction oxaloacetate + phosphate = phosphoenolpyruvate + hydrogencarbonate. Its function is as follows. Forms oxaloacetate, a four-carbon dicarboxylic acid source for the tricarboxylic acid cycle. This Neisseria meningitidis serogroup C / serotype 2a (strain ATCC 700532 / DSM 15464 / FAM18) protein is Phosphoenolpyruvate carboxylase.